The primary structure comprises 281 residues: Nuclear receptor-interacting protein 2 (281 aa).

The disordered stretch occupies residues 18–85 (ESCSTGQRQA…RAHLSQQRRL (68 aa)). Residues 36 to 47 (TPPPSSPWPTPP) are compositionally biased toward pro residues. The span at 55–78 (QEARRDEGEARTRGQEAQLRDRAH) shows a compositional bias: basic and acidic residues. The short motif at 244–248 (LQTLL) is the LXXLL motif element.

In terms of assembly, interacts with NR1F2, RARA and THRB in a ligand-dependent manner.

Its subcellular location is the nucleus. Functionally, down-regulates transcriptional activation by nuclear receptors such as NR1F2. This is Nuclear receptor-interacting protein 2 (NRIP2) from Homo sapiens (Human).